Here is a 224-residue protein sequence, read N- to C-terminus: Putative adhesin A1E_05320 (224 aa).

Residues 1-22 (MKKLLLIAATSATMLSSTLSFA) form the signal peptide.

This chain is Putative adhesin A1E_05320, found in Rickettsia canadensis (strain McKiel).